The chain runs to 244 residues: Carbonic anhydrase (244 aa).

The first 19 residues, 1 to 19 (MKGKLSIALMLSVCFSASA), serve as a signal peptide directing secretion. Residues 23 to 244 (VHWGYEGNGD…QPLNGRIIIH (222 aa)) enclose the Alpha-carbonic anhydrase domain. The cysteines at positions 46 and 199 are disulfide-linked. Residue H84 is the Proton acceptor of the active site. H109, H111, and H128 together coordinate Zn(2+). Position 195–196 (195–196 (TT)) interacts with substrate.

The protein belongs to the alpha-carbonic anhydrase family. Zn(2+) is required as a cofactor.

The protein localises to the periplasm. The enzyme catalyses hydrogencarbonate + H(+) = CO2 + H2O. Functionally, reversible hydration of carbon dioxide. The sequence is that of Carbonic anhydrase (cah) from Pectobacterium carotovorum (Erwinia carotovora).